Reading from the N-terminus, the 114-residue chain is MPPLSESEFLALAEAELTRIENIVETAADEADADIEVNRTGNVLTLEFDDGSKIIINSQAPMQELWVAARAGGFHFRRGDDGRWVDTRSKEELYVALSRYISQQSDVDVTLAAG.

The protein belongs to the frataxin family.

Involved in iron-sulfur (Fe-S) cluster assembly. May act as a regulator of Fe-S biogenesis. The chain is Iron-sulfur cluster assembly protein CyaY from Ralstonia pickettii (strain 12J).